Reading from the N-terminus, the 257-residue chain is 4-hydroxy-tetrahydrodipicolinate reductase (257 aa).

NAD(+) contacts are provided by residues 11–16 (GANGRM) and Glu37. Residue Arg38 participates in NADP(+) binding. NAD(+) is bound by residues 86-88 (GST) and 110-113 (SGNY). Catalysis depends on His144, which acts as the Proton donor/acceptor. His145 contributes to the (S)-2,3,4,5-tetrahydrodipicolinate binding site. The active-site Proton donor is Lys148. A (S)-2,3,4,5-tetrahydrodipicolinate-binding site is contributed by 154 to 155 (GT).

Belongs to the DapB family.

The protein resides in the cytoplasm. The enzyme catalyses (S)-2,3,4,5-tetrahydrodipicolinate + NAD(+) + H2O = (2S,4S)-4-hydroxy-2,3,4,5-tetrahydrodipicolinate + NADH + H(+). It carries out the reaction (S)-2,3,4,5-tetrahydrodipicolinate + NADP(+) + H2O = (2S,4S)-4-hydroxy-2,3,4,5-tetrahydrodipicolinate + NADPH + H(+). Its pathway is amino-acid biosynthesis; L-lysine biosynthesis via DAP pathway; (S)-tetrahydrodipicolinate from L-aspartate: step 4/4. Catalyzes the conversion of 4-hydroxy-tetrahydrodipicolinate (HTPA) to tetrahydrodipicolinate. This is 4-hydroxy-tetrahydrodipicolinate reductase from Caulobacter vibrioides (strain ATCC 19089 / CIP 103742 / CB 15) (Caulobacter crescentus).